Reading from the N-terminus, the 99-residue chain is DNA-directed RNA polymerase subunit omega (99 aa).

It belongs to the RNA polymerase subunit omega family. As to quaternary structure, the RNAP catalytic core consists of 2 alpha, 1 beta, 1 beta' and 1 omega subunit. When a sigma factor is associated with the core the holoenzyme is formed, which can initiate transcription.

It carries out the reaction RNA(n) + a ribonucleoside 5'-triphosphate = RNA(n+1) + diphosphate. Functionally, promotes RNA polymerase assembly. Latches the N- and C-terminal regions of the beta' subunit thereby facilitating its interaction with the beta and alpha subunits. This Xylella fastidiosa (strain Temecula1 / ATCC 700964) protein is DNA-directed RNA polymerase subunit omega.